We begin with the raw amino-acid sequence, 468 residues long: Mitochondrial dynamics protein MID51 (468 aa).

Topologically, residues 1-29 are mitochondrial intermembrane; sequence MAGVNGDRKGKKDDNGLGTAIDFVLSNAK. Residues 30–47 form a helical membrane-spanning segment; sequence LVLGVGGAAMLGIATLAV. At 48 to 468 the chain is on the cytoplasmic side; it reads KRMYDRALSA…SDPESLLRTV (421 aa). The dimerization stretch occupies residues 50 to 196; sequence MYDRALSAPS…LSGSLYDDLQ (147 aa). The disordered stretch occupies residues 56 to 123; that stretch reads SAPSSPTKAD…RGLARGGRPA (68 aa). Positions 91–108 are enriched in polar residues; sequence QNVSRSLQTLPTSSSSFK. The segment at 161–170 is important for interaction with DNM1L; that stretch reads AALDICAELR. ADP-binding residues include S188, S190, and H202. The tract at residues 235–244 is important for interaction with DNM1L; it reads RRENLEYFPR. 3 residues coordinate ADP: S344, R346, and K372.

The protein belongs to the MID49/MID51 family. In terms of assembly, homodimer.

Its subcellular location is the mitochondrion outer membrane. Functionally, mitochondrial outer membrane protein which regulates mitochondrial fission/fusion dynamics. Promotes the recruitment and association of the fission mediator dynamin-related protein 1 (DNM1L) to the mitochondrial surface independently of the mitochondrial fission FIS1 and MFF proteins. Regulates DNM1L GTPase activity and DNM1L oligomerization. In Danio rerio (Zebrafish), this protein is Mitochondrial dynamics protein MID51 (mief1).